The chain runs to 131 residues: Large ribosomal subunit protein bL17 (131 aa).

This sequence belongs to the bacterial ribosomal protein bL17 family. As to quaternary structure, part of the 50S ribosomal subunit. Contacts protein L32.

The protein is Large ribosomal subunit protein bL17 of Cupriavidus pinatubonensis (strain JMP 134 / LMG 1197) (Cupriavidus necator (strain JMP 134)).